We begin with the raw amino-acid sequence, 103 residues long: UPF0473 protein LVIS_1220 (103 aa).

It belongs to the UPF0473 family.

The chain is UPF0473 protein LVIS_1220 from Levilactobacillus brevis (strain ATCC 367 / BCRC 12310 / CIP 105137 / JCM 1170 / LMG 11437 / NCIMB 947 / NCTC 947) (Lactobacillus brevis).